The following is a 386-amino-acid chain: MKLNPSLLTAAGLVSAQLASALPQASSSTVSPSPSPSATPGSFVTTSGLNFVIDGKTGYFAGSNSYWIGFQKNNDDVDLVFSHLQESGLKILRVWGFNDVNQKPTDGSVYYHLLADGTATVNEGEDGLQRLDYVVSSAEKHGIKLIINFVNFWDDYGGINAYVKAFGGSKEDFYTNDAMQAAYRAYIKAVISRYSDSTAIFAWELANEPRCQGCETTVLYNWIESTSQYIKSLDSKHLVCIGDEGFGLDTGSDGSYPYQYSEGSDFAKNLAIPTIDFGTFHLYPSSWGTTNDWGNGWVTSHGAACKEAGKPCLFEEYGVTSDHCAVEKPWQNTALNTTAISGDLYWQYGDQLSGGPSPDDGNTFYYGTDDFKCLVTDHIAAINSRN.

An N-terminal signal peptide occupies residues 1–21; that stretch reads MKLNPSLLTAAGLVSAQLASA. Residues Trp95 and Asn207 each contribute to the substrate site. Catalysis depends on Glu208, which acts as the Proton donor. Residue Tyr283 coordinates substrate. The active-site Nucleophile is the Glu316. Asn336 carries an N-linked (GlcNAc...) asparagine glycan. Position 346 (Trp346) interacts with substrate.

Belongs to the glycosyl hydrolase 5 (cellulase A) family.

Its subcellular location is the secreted. It catalyses the reaction Random hydrolysis of (1-&gt;4)-beta-D-mannosidic linkages in mannans, galactomannans and glucomannans.. Functionally, endo-1,4-mannanase, a crucial enzyme for depolymerization of seed galactomannans and wood galactoglucomannans. The protein is Probable mannan endo-1,4-beta-mannosidase A (manA) of Aspergillus flavus (strain ATCC 200026 / FGSC A1120 / IAM 13836 / NRRL 3357 / JCM 12722 / SRRC 167).